We begin with the raw amino-acid sequence, 525 residues long: GMP synthase [glutamine-hydrolyzing] (525 aa).

In terms of domain architecture, Glutamine amidotransferase type-1 spans 9-207 (RILILDFGSQ…VLDICQCEKL (199 aa)). Cys-86 functions as the Nucleophile in the catalytic mechanism. Catalysis depends on residues His-181 and Glu-183. A GMPS ATP-PPase domain is found at 208 to 400 (WTPDAIIEDA…LGLPYDMLYR (193 aa)). 235 to 241 (SGGVDSS) is an ATP binding site.

Homodimer.

It catalyses the reaction XMP + L-glutamine + ATP + H2O = GMP + L-glutamate + AMP + diphosphate + 2 H(+). The protein operates within purine metabolism; GMP biosynthesis; GMP from XMP (L-Gln route): step 1/1. In terms of biological role, catalyzes the synthesis of GMP from XMP. In Pseudoalteromonas atlantica (strain T6c / ATCC BAA-1087), this protein is GMP synthase [glutamine-hydrolyzing].